Reading from the N-terminus, the 785-residue chain is DNA ligase (785 aa).

Residues 32–36 (DAEYD), 81–82 (SL), and Glu-121 contribute to the NAD(+) site. The N6-AMP-lysine intermediate role is filled by Lys-123. Residues Arg-144, Glu-181, Lys-297, and Lys-321 each contribute to the NAD(+) site. The Zn(2+) site is built by Cys-415, Cys-418, Cys-445, and Cys-451. Residues 702-785 (VEGLPLAGET…AFLKGHGISA (84 aa)) enclose the BRCT domain.

This sequence belongs to the NAD-dependent DNA ligase family. LigA subfamily. It depends on Mg(2+) as a cofactor. Mn(2+) serves as cofactor.

The enzyme catalyses NAD(+) + (deoxyribonucleotide)n-3'-hydroxyl + 5'-phospho-(deoxyribonucleotide)m = (deoxyribonucleotide)n+m + AMP + beta-nicotinamide D-nucleotide.. Functionally, DNA ligase that catalyzes the formation of phosphodiester linkages between 5'-phosphoryl and 3'-hydroxyl groups in double-stranded DNA using NAD as a coenzyme and as the energy source for the reaction. It is essential for DNA replication and repair of damaged DNA. This Pseudomonas fluorescens (strain Pf0-1) protein is DNA ligase.